Reading from the N-terminus, the 266-residue chain is Small ribosomal subunit protein uS3 (266 aa).

In terms of domain architecture, KH type-2 spans 39–107 (VREYLKKKLK…PVHVNIEEIR (69 aa)). Residues 218–266 (EVAEDKRPRRNARPGDRRPRRDGEGGAPGARRGAPRRGAGKPEDGKTGE) are disordered. Composition is skewed to basic and acidic residues over residues 230–241 (RPGDRRPRRDGE) and 257–266 (GKPEDGKTGE).

This sequence belongs to the universal ribosomal protein uS3 family. As to quaternary structure, part of the 30S ribosomal subunit. Forms a tight complex with proteins S10 and S14.

In terms of biological role, binds the lower part of the 30S subunit head. Binds mRNA in the 70S ribosome, positioning it for translation. The sequence is that of Small ribosomal subunit protein uS3 from Burkholderia ambifaria (strain MC40-6).